We begin with the raw amino-acid sequence, 174 residues long: UPF0340 protein SH0921 (174 aa).

It belongs to the UPF0340 family.

In Staphylococcus haemolyticus (strain JCSC1435), this protein is UPF0340 protein SH0921.